The primary structure comprises 668 residues: Potassium voltage-gated channel subfamily KQT member 1 (668 aa).

Topologically, residues 1–119 are cytoplasmic; sequence MDTASSPPSA…YNFLERPTGW (119 aa). Position 27 is a phosphoserine; by PKA (Ser-27). A helical membrane pass occupies residues 120 to 141; the sequence is KCFVYHFTVFLIVLVCLIFSVL. At 142–152 the chain is on the extracellular side; that stretch reads STIEQYAALAT. The chain crosses the membrane as a helical span at residues 153–175; it reads GTLFWMEIVLVVFFGTEYVVRLW. At 176-191 the chain is on the cytoplasmic side; it reads SAGCRSKYVGIWGRLR. The helical transmembrane segment at 192–217 threads the bilayer; sequence FARKPISIIDLIVVVASMVVLCVGSK. Topologically, residues 218–225 are extracellular; that stretch reads GQVFATSA. A helical; Voltage-sensor membrane pass occupies residues 226–241; sequence IRGIRFLQILRMLHVD. The interval 237-245 is interaction with KCNE3; that stretch reads MLHVDRQGG. Over 242-259 the chain is Cytoplasmic; that stretch reads RQGGTWRLLGSVVFIHRQ. Gln-243 is an a 1,2-diacyl-sn-glycero-3-phospho-(1D-myo-inositol-4,5-bisphosphate) binding site. Residues 260 to 282 form a helical membrane-spanning segment; it reads ELITTLYIGFLGLIFSSYFVYLA. Topologically, residues 283 to 298 are extracellular; sequence EKDAVNESGRIEFGSY. Asn-288 carries N-linked (GlcNAc...) asparagine glycosylation. Positions 299–319 form an intramembrane region, pore-forming; the sequence is ADALWWGVVTVTTIGYGDKVP. Topologically, residues 320 to 321 are extracellular; sequence QT. A helical membrane pass occupies residues 322–347; the sequence is WVGKTIASCFSVFAISFFALPAGILG. At 348 to 668 the chain is on the cytoplasmic side; it reads SGFALKVQQK…VPQTGPDEGS (321 aa). An interaction with CALM region spans residues 369-381; it reads AAASLIQTAWRCY. 2 positions are modified to phosphoserine: Ser-406 and Ser-408. The tract at residues 514 to 528 is interaction with CALM; calcium-dependent; sequence KVIRRMQYFVAKKKF. Residues 534 to 571 form an interaction with KCNE1 C-terminus region; it reads PYDVRDVIEQYSQGHLNLMVRIKELQRRLDQSIGKPSL. A coiled-coil region spans residues 584–620; sequence SNTIGARLNRVEDKVTQLDQRLVIITDMLHQLLSMQQ. An interaction with AKAP9 region spans residues 587–615; that stretch reads IGARLNRVEDKVTQLDQRLVIITDMLHQL. Residues 588–619 form a C-terminal assembly domain (tetramerization) region; the sequence is GARLNRVEDKVTQLDQRLVIITDMLHQLLSMQ.

The protein belongs to the potassium channel family. KQT (TC 1.A.1.15) subfamily. Kv7.1/KCNQ1 sub-subfamily. As to quaternary structure, tetramer. Heterotetramer with KCNE1; form the native cardiac channel I(Ks) which increases the amplitude and slows down the activation kinetics of outward potassium current and targets to the membrane raft. Interacts (via C-terminus) with CALM; forms a heterooctameric structure (with 4:4 KCNQ1:CALM stoichiometry) in a calcium-independent manner. Interacts with AKAP9; targets protein kinase A (PKA) catalytic and regulatory subunits and protein phosphatase 1 (PP1) to the KCNQ1-KCNE1 complex, allowing PKA-mediated phosphorylation and increase of delayed rectifier potassium channel activity. Interacts with KCNE2; form an heterooligomer complex that targets to the membrane raft and leading to currents with an apparently instantaneous activation, a rapid deactivation process and a linear current-voltage relationship and decreases the amplitude of the outward current. Interacts with AP2M1; mediates estrogen-induced internalization via clathrin-coated vesicles. Interacts with NEDD4L; promotes internalization and decreases I(Ks) currents. Interacts with USP2; counteracts the NEDD4L-specific down-regulation of I(Ks) and restore plasma membrane localization. Heterotetramer with KCNQ5; has a voltage-gated potassium channel activity. Interacts with KCNE3; four KCNE3 molecules are bound to one KCNQ1 tetramer (4:4 KCNQ1:KCNE3 stoichiometry); alters membrane raft localization; affects KCNQ1 structure and gating properties. Interacts with KCNE4; impairs KCNQ1 localization in lipid rafts and inhibits voltage-gated potassium channel activity. Interacts with KCNE5; impairs KCNQ1 localization in lipid rafts and only conducts current upon strong and continued depolarization. Interacts with SLC5A3; forms coregulatory channel-transporter complexes that modulate Na(+)-coupled myo-inositol influx through the transporter. Phosphorylation at Ser-27 by PKA; increases delayed rectifier potassium channel activity of the KCNQ1-KCNE1 complex through a macromolecular complex that includes PKA, PP1, and the targeting protein AKAP9. Post-translationally, ubiquitinated by NEDD4L; promotes internalization. The ubiquitinylated form is internalized through a clathrin-mediated endocytosis by interacting with AP2M1 and is recycled back to the cell membrane via RAB4A and RAB11A. In terms of processing, deubiquitinated by USP2; counteracts the NEDD4L-specific down-regulation of I(Ks) and restores the membrane localization. As to expression, expressed in heart, kidney and salivary glands. Detected in the cochlea. Almost undetectable in brain, skeletal muscle and liver. Widely expressed in embryonic and neonatal tissues. Expressed in choroid plexus epithelium (at protein level).

Its subcellular location is the cell membrane. The protein localises to the cytoplasmic vesicle membrane. The protein resides in the early endosome. It localises to the membrane raft. It is found in the endoplasmic reticulum. Its subcellular location is the basolateral cell membrane. The protein localises to the apical cell membrane. It catalyses the reaction K(+)(in) = K(+)(out). With respect to regulation, PIP2 molecule is essential to activate KCNQ channels by inducing the coupling of the voltage-sensing domain (VSD) and the pore-forming domain (PD). Upon channel activation, PIP2 disrupts the VSD-calmodulin/CALM interactions, causing the release of CALM from the VSD which triggers the opening of the gate. Calcium potentiates KCNQ1 channel current through calcium-bound CALM. Calcium-bound CALM competes with PIP2 to stabilize the channel open state. Pore-forming subunit of the voltage-gated potassium (Kv) channel involved in the regulation of cardiomyocyte excitability and important in normal development and functions of myocardium, inner ear, stomach and colon. Associates with KCNE beta subunits that modulates current kinetics. Induces a voltage-dependent by rapidly activating and slowly deactivating potassium-selective outward current. Also promotes a delayed voltage activated potassium current showing outward rectification characteristic. During beta-adrenergic receptor stimulation participates in cardiac increases the amplitude and slows down the activation kinetics of outward potassium current I(Ks). Muscarinic agonist oxotremorine-M strongly suppresses KCNQ1/KCNE1 current. When associated with KCNE3, forms the potassium channel that is important for cyclic AMP-stimulated intestinal secretion of chloride ions. This interaction with KCNE3 is reduced by 17beta-estradiol, resulting in the reduction of currents. During conditions of increased substrate load, maintains the driving force for proximal tubular and intestinal sodium ions absorption, gastric acid secretion, and cAMP-induced jejunal chloride ions secretion. Allows the provision of potassium ions to the luminal membrane of the secretory canaliculus in the resting state as well as during stimulated acid secretion. When associated with KCNE2, forms a heterooligomer complex leading to currents with an apparently instantaneous activation, a rapid deactivation process and a linear current-voltage relationship and decreases the amplitude of the outward current. When associated with KCNE4, inhibits voltage-gated potassium channel activity. When associated with KCNE5, this complex only conducts current upon strong and continued depolarization. Also forms a heterotetramer with KCNQ5; has a voltage-gated potassium channel activity. Binds with phosphatidylinositol 4,5-bisphosphate. KCNQ1-KCNE2 channel associates with Na(+)-coupled myo-inositol symporter in the apical membrane of choroid plexus epithelium and regulates the myo-inositol gradient between blood and cerebrospinal fluid with an impact on neuron excitability. The protein is Potassium voltage-gated channel subfamily KQT member 1 of Mus musculus (Mouse).